Reading from the N-terminus, the 1365-residue chain is ATP-dependent RNA helicase DHX29 (1365 aa).

Residues 1–10 (MGGKNKKHKA) show a composition bias toward basic residues. Disordered regions lie at residues 1 to 74 (MGGK…NDSG), 174 to 222 (SQEF…EETT), and 235 to 257 (AEQQ…EKFD). 2 stretches are compositionally biased toward low complexity: residues 11-36 (PGAA…VGEA) and 43-53 (ARPAPAVPTGA). Phosphoserine occurs at positions 69, 190, and 198. Polar residues predominate over residues 187–203 (KFQSVQIQATLSPPQQT). Residues 206 to 222 (KRQEEDPKIKPKKEETT) are compositionally biased toward basic and acidic residues. The stretch at 281 to 308 (LEKNKQGQKEAQEKIRKFQREMETLEDH) forms a coiled coil. The segment at 500 to 524 (QQQQQQQQRPESEKGGSEDPEESWE) is disordered. One can recognise a Helicase ATP-binding domain in the interval 581–754 (VETLKRHRVV…FTHCPILRIS (174 aa)). An ATP-binding site is contributed by 594 to 601 (GETGSGKS). The short motif at 701 to 704 (DEVH) is the DEAH box element. Positions 848–1025 (LILELLVYLD…ELCLHIMKCD (178 aa)) constitute a Helicase C-terminal domain.

The protein belongs to the DEAD box helicase family. DEAH subfamily. Part of the 43S pre-initiation complex (PIC) that contains at least Met-tRNA, EIF1, EIF1A (EIF1AX or EIF1AY), EIF2S1, EIF2S2, EIF2S3, EIF3A, EIF3B, EIF3C, EIF3D, EIF3E, EIF3F, EIF3G, EIF3H, EIF3I, EIF3J, EIF3K, EIF3L, EIF3M, DHX29 and the 40S ribosomal subunit.

It is found in the cytoplasm. It carries out the reaction ATP + H2O = ADP + phosphate + H(+). Its function is as follows. ATP-binding RNA helicase involved in translation initiation. Part of the 43S pre-initiation complex that is required for efficient initiation on mRNAs of higher eukaryotes with structured 5'-UTRs by promoting efficient NTPase-dependent 48S complex formation. Specifically binds to the 40S ribosome near the mRNA entrance. Does not possess a processive helicase activity. In Mus musculus (Mouse), this protein is ATP-dependent RNA helicase DHX29.